The primary structure comprises 1705 residues: ALK tyrosine kinase receptor (1705 aa).

The N-terminal stretch at 1–21 (MIARILYFFLWSAAFLPELQC) is a signal peptide. Topologically, residues 22–1035 (ASQRTADALT…SLSHLALGLS (1014 aa)) are extracellular. 2 N-linked (GlcNAc...) asparagine glycosylation sites follow: asparagine 40 and asparagine 48. Residues 54-76 (RIKRKTLSVDFAVPSLLRYYLAL) are heparin-binding region. Residues asparagine 124, asparagine 259, asparagine 334, asparagine 434, asparagine 442, asparagine 458, asparagine 484, asparagine 578, asparagine 590, and asparagine 635 are each glycosylated (N-linked (GlcNAc...) asparagine). One can recognise an MAM domain in the interval 486-644 (SYCSFGREDC…NFTLSMECFL (159 aa)). A disulfide bridge connects residues cysteine 694 and cysteine 707. Asparagine 717 carries N-linked (GlcNAc...) asparagine glycosylation. A disulfide bond links cysteine 788 and cysteine 799. N-linked (GlcNAc...) asparagine glycosylation is found at asparagine 808 and asparagine 881. The tract at residues 842 to 892 (GGGRGYSSQSETPEEVMDRDPSIPGRNGKSGTAGGGGGWNDSAPVPQGGRP) is disordered. A disulfide bond links cysteine 903 and cysteine 921. Asparagine 979 carries an N-linked (GlcNAc...) asparagine glycan. 2 cysteine pairs are disulfide-bonded: cysteine 980–cysteine 988 and cysteine 983–cysteine 997. The segment at 980-1016 (CSHCESGDCHETSEGMVCYCDEELTLAPDGVSCINST) is EGF-like. The N-linked (GlcNAc...) asparagine glycan is linked to asparagine 1014. The helical transmembrane segment at 1036 to 1056 (VGTSALIAALLLAVSGVMIMY) threads the bilayer. Topologically, residues 1057-1705 (RRKHTELQSI…KMEGHNATVL (649 aa)) are cytoplasmic. Positions 1113-1389 (ISLTRGLGHG…IDYCLQDPDV (277 aa)) constitute a Protein kinase domain. Residues 1119-1127 (LGHGAFGEV) and lysine 1147 each bind ATP. The active-site Proton acceptor is aspartate 1246. Disordered stretches follow at residues 1395–1499 (PVEY…GHVN), 1505–1524 (AHSS…WNPT), 1532–1557 (QQQK…GQEQ), 1588–1613 (QQQQ…PAPT), and 1646–1681 (GLPM…DSRP). Residues 1484–1493 (KPSSTTSNAQ) show a composition bias toward polar residues. 2 stretches are compositionally biased toward low complexity: residues 1532 to 1544 (QQQK…AQRQ) and 1588 to 1602 (QQQQ…LCRP). The segment covering 1603–1613 (LLPPPPPPAPT) has biased composition (pro residues).

Belongs to the protein kinase superfamily. Tyr protein kinase family. Insulin receptor subfamily. In terms of assembly, homodimer; homodimerizes upon binding to alkal ligands (alkal1, alkal2a or alkal2b). As to expression, highly expressed in the developing central nervous system: highly expressed in brain, with much lower expression in heart, caudal fin and testis.

It is found in the cell membrane. It catalyses the reaction L-tyrosyl-[protein] + ATP = O-phospho-L-tyrosyl-[protein] + ADP + H(+). Its activity is regulated as follows. Inhibited by ALK inhibitor TAE684. Functionally, receptor tyrosine kinase required for neurogenesis in the developing central nervous system. Following activation by alkal ligands (alkal1, alkal2a or alkal2b) at the cell surface, transduces an extracellular signal into an intracellular response. Ligand-binding to the extracellular domain induces tyrosine kinase activation, resulting in the activation of the mitogen-activated protein kinase (MAPK) pathway. Phosphorylates almost exclusively at the first tyrosine of the Y-x-x-x-Y-Y motif. The polypeptide is ALK tyrosine kinase receptor (Danio rerio (Zebrafish)).